We begin with the raw amino-acid sequence, 534 residues long: Lysophosphatidylcholine acyltransferase 1 (534 aa).

Residues 1 to 25 (MRLRGRGPRAAPSSSSGAGDARRLA) form a disordered region. Residues 1–57 (MRLRGRGPRAAPSSSSGAGDARRLAPPGRNPFVHELRLSALQKAQVAFMTLTLFPIR) are Cytoplasmic-facing. Low complexity predominate over residues 8–19 (PRAAPSSSSGAG). Residues 58–78 (LLFAAFMMLLAWPFALVASLG) traverse the membrane as a helical; Signal-anchor for type II membrane protein segment. The Lumenal portion of the chain corresponds to 79–534 (PPDKEPEQPL…GRKNSCKKVD (456 aa)). The HXXXXD motif motif lies at 135-140 (HSSYFD). 2 EF-hand domains span residues 379–414 (PVSDALEDMFSLFDESGGGEIDLREYVVALSVVCRP) and 451–486 (ISELTVTDLFQAIDQEERGRITFDDFCGFAEMYPDF). Residues Asp392, Ser394, Glu398, and Glu403 each coordinate Ca(2+). Residues 531-534 (KKVD) carry the Di-lysine motif motif.

It belongs to the 1-acyl-sn-glycerol-3-phosphate acyltransferase family. In terms of tissue distribution, enriched in alveolar type II cells of lung. Also highly expressed in stomach.

The protein resides in the endoplasmic reticulum membrane. The protein localises to the golgi apparatus membrane. Its subcellular location is the cell membrane. It is found in the lipid droplet. It catalyses the reaction a 1-acyl-sn-glycero-3-phosphocholine + an acyl-CoA = a 1,2-diacyl-sn-glycero-3-phosphocholine + CoA. It carries out the reaction a 1-O-alkyl-sn-glycero-3-phosphocholine + acetyl-CoA = a 1-O-alkyl-2-acetyl-sn-glycero-3-phosphocholine + CoA. The catalysed reaction is a 1-acyl-sn-glycero-3-phosphate + an acyl-CoA = a 1,2-diacyl-sn-glycero-3-phosphate + CoA. The enzyme catalyses a 1-O-(1Z-alkenyl)-sn-glycero-3-phosphocholine + an acyl-CoA = a 1-O-(1Z-alkenyl)-2-acyl-sn-glycero-3-phosphocholine + CoA. It catalyses the reaction 1-acyl-sn-glycero-3-phospho-(1'-sn-glycerol) + an acyl-CoA = a 1,2-diacyl-sn-glycero-3-phospho-(1'-sn-glycerol) + CoA. It carries out the reaction a 1-acyl-sn-glycero-3-phosphocholine + hexadecanoyl-CoA = 1-acyl-2-hexadecanoyl-sn-glycero-3-phosphocholine + CoA. The catalysed reaction is a 1-acyl-sn-glycero-3-phosphate + hexadecanoyl-CoA = 1-acyl-2-hexadecanoyl-sn-glycero-3-phosphate + CoA. The enzyme catalyses 1-acyl-sn-glycero-3-phospho-(1'-sn-glycerol) + hexadecanoyl-CoA = 1-acyl-2-hexadecanoyl-sn-glycero-3-phospho-(1'-sn-glycerol) + CoA. It catalyses the reaction 1-hexadecanoyl-sn-glycero-3-phosphocholine + hexadecanoyl-CoA = 1,2-dihexadecanoyl-sn-glycero-3-phosphocholine + CoA. It carries out the reaction 1-O-hexadecyl-sn-glycero-3-phosphocholine + hexadecanoyl-CoA = 1-O-hexadecyl-2-hexadecanoyl-sn-glycero-3-phosphocholine + CoA. The catalysed reaction is a 1-O-(1Z-alkenyl)-sn-glycero-3-phosphocholine + hexadecanoyl-CoA = 1-O-(1Z)-alkenyl-2-hexadecanoyl-sn-glycero-3-phosphocholine + CoA. The enzyme catalyses 1-hexadecanoyl-sn-glycero-3-phospho-(1'-sn-glycerol) + hexadecanoyl-CoA = 1,2-dihexadecanoyl-sn-glycero-3-phospho-(1'-sn-glycerol) + CoA. It catalyses the reaction 1-dodecanoyl-sn-glycero-3-phosphocholine + hexadecanoyl-CoA = 1-dodecanoyl-2-hexadecanoyl-sn-glycero-3-phosphocholine + CoA. It carries out the reaction 1-tetradecanoyl-sn-glycero-3-phosphocholine + hexadecanoyl-CoA = 1-tetradecanoyl-2-hexadecanoyl-sn-glycero-3-phosphocholine + CoA. The catalysed reaction is 1-O-octadecyl-sn-glycero-3-phosphocholine + hexadecanoyl-CoA = 1-O-octadecyl-2-hexadecanoyl-sn-glycero-3-phosphocholine + CoA. The enzyme catalyses 1-octadecanoyl-sn-glycero-3-phosphocholine + hexadecanoyl-CoA = 1-octadecanoyl-2-hexadecanoyl-sn-glycero-3-phosphocholine + CoA. It catalyses the reaction 1-(9Z-octadecenoyl)-sn-glycero-3-phosphocholine + hexadecanoyl-CoA = 1-(9Z-octadecenoyl)-2-hexadecanoyl-sn-glycero-3-phosphocholine + CoA. It carries out the reaction 1-eicosanoyl-sn-glycero-3-phosphocholine + hexadecanoyl-CoA = 1-eicosanoyl-2-hexadecanoyl-sn-glycero-3-phosphocholine + CoA. The catalysed reaction is hexanoyl-CoA + 1-hexadecanoyl-sn-glycero-3-phosphocholine = 1-hexadecanoyl-2-hexanoyl-sn-glycero-3-phosphocholine + CoA. The enzyme catalyses octanoyl-CoA + 1-hexadecanoyl-sn-glycero-3-phosphocholine = 1-hexadecanoyl-2-octanoyl-sn-glycero-3-phosphocholine + CoA. It catalyses the reaction decanoyl-CoA + 1-hexadecanoyl-sn-glycero-3-phosphocholine = 1-hexadecanoyl-2-decanoyl-sn-glycero-3-phosphocholine + CoA. It carries out the reaction dodecanoyl-CoA + 1-hexadecanoyl-sn-glycero-3-phosphocholine = 1-hexadecanoyl-2-dodecanoyl-sn-glycero-3-phosphocholine + CoA. The catalysed reaction is tetradecanoyl-CoA + 1-hexadecanoyl-sn-glycero-3-phosphocholine = 1-hexadecanoyl-2-tetradecanoyl-sn-glycero-3-phosphocholine + CoA. The enzyme catalyses 1-hexadecanoyl-sn-glycero-3-phosphocholine + (9Z)-octadecenoyl-CoA = 1-hexadecanoyl-2-(9Z-octadecenoyl)-sn-glycero-3-phosphocholine + CoA. It catalyses the reaction (9Z,12Z)-octadecadienoyl-CoA + 1-hexadecanoyl-sn-glycero-3-phosphocholine = 1-hexadecanoyl-2-(9Z,12Z-octadecadienoyl)-sn-glycero-3-phosphocholine + CoA. It carries out the reaction (4Z,7Z,10Z,13Z,16Z,19Z)-docosahexaenoyl-CoA + 1-hexadecanoyl-sn-glycero-3-phosphocholine = 1-hexadecanoyl-2-(4Z,7Z,10Z,13Z,16Z,19Z-docosahexaenoyl)-sn-glycero-3-phosphocholine + CoA. The catalysed reaction is 1-hexadecanoyl-sn-glycero-3-phosphocholine + acetyl-CoA = 1-hexadecanoyl-2-acetyl-sn-glycero-3-phosphocholine + CoA. The enzyme catalyses eicosanoyl-CoA + 1-hexadecanoyl-sn-glycero-3-phosphocholine = 1-hexadecanoyl-2-eicosanoyl-sn-glycero-3-phosphocholine + CoA. It catalyses the reaction 1-O-hexadecyl-sn-glycero-3-phosphocholine + acetyl-CoA = 1-O-hexadecyl-2-acetyl-sn-glycero-3-phosphocholine + CoA. The protein operates within lipid metabolism; phospholipid metabolism. Its activity is regulated as follows. Activity is stimulated by Mg(2+) or Mn(2+). Its function is as follows. Exhibits acyltransferase activity. Exhibits acetyltransferase activity. Activity is calcium-independent. Catalyzes the conversion of lysophosphatidylcholine (1-acyl-sn-glycero-3-phosphocholine or LPC) into phosphatidylcholine (1,2-diacyl-sn-glycero-3-phosphocholine or PC). Catalyzes the conversion 1-acyl-sn-glycerol-3-phosphate (lysophosphatidic acid or LPA) into 1,2-diacyl-sn-glycerol-3-phosphate (phosphatidic acid or PA) by incorporating an acyl moiety at the sn-2 position of the glycerol backbone. Displays a clear preference for saturated fatty acyl-CoAs, and 1-myristoyl or 1-palmitoyl LPC as acyl donors and acceptors, respectively. Involved in platelet-activating factor (PAF) biosynthesis by catalyzing the conversion of the PAF precursor, 1-O-alkyl-sn-glycero-3-phosphocholine (lyso-PAF) into 1-O-alkyl-2-acetyl-sn-glycero-3-phosphocholine (PAF). May synthesize phosphatidylcholine in pulmonary surfactant, thereby playing a pivotal role in respiratory physiology. Involved in the regulation of lipid droplet number and size. The protein is Lysophosphatidylcholine acyltransferase 1 (Lpcat1) of Rattus norvegicus (Rat).